A 231-amino-acid polypeptide reads, in one-letter code: Chromosome partition protein MukE (231 aa).

The tract at residues 211–231 is disordered; the sequence is SLLADEEEQDYNEQAELEGEA. Over residues 214 to 231 the composition is skewed to acidic residues; that stretch reads ADEEEQDYNEQAELEGEA.

It belongs to the MukE family. As to quaternary structure, interacts, and probably forms a ternary complex, with MukF and MukB. The complex formation is stimulated by calcium or magnesium.

It is found in the cytoplasm. It localises to the nucleoid. Functionally, involved in chromosome condensation, segregation and cell cycle progression. May participate in facilitating chromosome segregation by condensation DNA from both sides of a centrally located replisome during cell division. Probably acts via its interaction with MukB and MukF. This Vibrio vulnificus (strain CMCP6) protein is Chromosome partition protein MukE.